A 289-amino-acid chain; its full sequence is MGSGFSLFQKNLSSCYGDRDLLQPGLGDLPESCVALILQNLDPVEICRFSKLNTAFHGASWADFVWESKLPPDYKLILEKILGSFPDNLRKRDIFTFLSRVNSFDEGNKKAWVDKRTGGLCLCTSAKGLSITGIDDRRYWSHIPSDDSRFASVAYVQQIWWFQVDGEIDFPFPAGTYSVYFRLQLGKPGKRFGWKVVDTEQVHGWNIKPVRFQLSTEDGQHSSSQCMLTEAGNWSHYHAGDFVVGKSKSSSTKIKFSMTQIDCTHTKGGLCVDSVVVYPSSCKDRLMQI.

Residues Gln23–Lys69 form the F-box domain.

In terms of assembly, part of a SCF (ASK-cullin-F-box) protein ligase complex. Interacts with SKP1A/ASK1.

It is found in the nucleus. It participates in protein modification; protein ubiquitination. Its function is as follows. Component of SCF(ASK-cullin-F-box) E3 ubiquitin ligase complexes, which may mediate the ubiquitination and subsequent proteasomal degradation of target proteins. The protein is F-box protein PP2-A11 (PP2A11) of Arabidopsis thaliana (Mouse-ear cress).